We begin with the raw amino-acid sequence, 178 residues long: Co-chaperone protein p23-1 (178 aa).

A CS domain is found at Ser2–Thr91. Acidic residues-rich tracts occupy residues Asp112 to Asp126 and Asp136 to Thr155. Residues Asp112–Asp178 are disordered. Over residues Ala157–Asp178 the composition is skewed to basic and acidic residues.

It belongs to the p23/wos2 family. Interacts with HSP90 in an ATP-dependent manner.

Functionally, acts as a co-chaperone for HSP90. The sequence is that of Co-chaperone protein p23-1 from Brassica napus (Rape).